The chain runs to 139 residues: Diacylglycerol acyltransferase/mycolyltransferase Ag85A (139 aa).

Serine 10 functions as the Nucleophile in the catalytic mechanism. Substrate contacts are provided by serine 10 and aspartate 38. Glutamate 114 is an active-site residue. Residues 116–119 and lysine 123 each bind substrate; that span reads FVRT.

The protein belongs to the mycobacterial A85 antigen family. In terms of assembly, homodimer.

It localises to the secreted. Its subcellular location is the cell wall. It is found in the cytoplasm. The catalysed reaction is an acyl-CoA + a 1,2-diacyl-sn-glycerol = a triacyl-sn-glycerol + CoA. It carries out the reaction 2 alpha,alpha'-trehalose 6-mycolate = alpha,alpha'-trehalose 6,6'-bismycolate + alpha,alpha-trehalose. In terms of biological role, the antigen 85 proteins (FbpA, FbpB, FbpC) are responsible for the high affinity of mycobacteria for fibronectin, a large adhesive glycoprotein, which facilitates the attachment of M.tuberculosis to murine alveolar macrophages (AMs). They also help to maintain the integrity of the cell wall by catalyzing the transfer of mycolic acids to cell wall arabinogalactan, and through the synthesis of alpha,alpha-trehalose dimycolate (TDM, cord factor). They catalyze the transfer of a mycoloyl residue from one molecule of alpha,alpha-trehalose monomycolate (TMM) to another TMM, leading to the formation of TDM. FbpA mediates triacylglycerol (TAG) formation with long-chain acyl-CoA as the acyl donor and 1,2-dipalmitoyl-sn-glycerol (1,2-dipalmitin) as the acyl acceptor. It has a preference for C26:0-CoA over C18:1-CoA. The protein is Diacylglycerol acyltransferase/mycolyltransferase Ag85A (fbpA) of Mycobacterium marinum.